The following is a 449-amino-acid chain: Adenylosuccinate synthetase isozyme 1 A (449 aa).

Residues 1–10 (MSHKSCYTNP) are compositionally biased toward polar residues. Positions 1–22 (MSHKSCYTNPGTGGKRPRNDKG) are disordered. Residues 34-40 (GDEGKGK) and 62-64 (GHT) each bind GTP. D35 functions as the Proton acceptor in the catalytic mechanism. Mg(2+)-binding residues include D35 and G62. D35 lines the substrate pocket. Residues 35–38 (DEGK), 60–63 (NAGH), T155, R169, N248, T263, and R327 contribute to the IMP site. H63 serves as the catalytic Proton donor. Substrate is bound at residue 323-329 (VTTGRKR). Residues R329, 355-357 (KLD), and 437-440 (GVGK) each bind GTP.

It belongs to the adenylosuccinate synthetase family. In terms of assembly, homodimer. Mg(2+) serves as cofactor.

The protein resides in the cytoplasm. It catalyses the reaction IMP + L-aspartate + GTP = N(6)-(1,2-dicarboxyethyl)-AMP + GDP + phosphate + 2 H(+). The protein operates within purine metabolism; AMP biosynthesis via de novo pathway; AMP from IMP: step 1/2. In terms of biological role, component of the purine nucleotide cycle (PNC), which interconverts IMP and AMP to regulate the nucleotide levels in various tissues, and which contributes to glycolysis and ammoniagenesis. Catalyzes the first committed step in the biosynthesis of AMP from IMP. The sequence is that of Adenylosuccinate synthetase isozyme 1 A (adss1a) from Salmo salar (Atlantic salmon).